Reading from the N-terminus, the 459-residue chain is MAAMKTTPGLVNFFIFNSTYGPREGEEHEKIILYIPTEEDIDRKIKTIGLCEALVKFTETFAPDKPCESLHTQKSRQIFYQPEPDFWMIMTISIPFSEKIAKDGKNTIEYHYDDVLDNVLDAVLKQSYKMFKLFNGPFNYLSETYGREALKKRSEYFFLSYLQTLNFSSFDLLDIFAGIQFLPLDKNTFLKIQSFVNLIEHTFSQIKYTAFLYSDKLVWSGLEQEDMRILYKYLVTSLFPATIDSELADRSSQGYVVIQPKSHHGRFVTGPPDLKDIPTPRKPPRIFVNTDTEQEELLLICYKALDATICLLVSAPFPTLDFFKKLDMFIGPQLTTLANVICEQSSKKSLSSDQQYRYIYFNHMNLAQKSTIHSKKASVAGVSPEIMRLLGDISADFNSFQEDGETYVKTMSDCWVVGRKSDQREFFVILNQKSANLIEINEEVKKLSSCHFNNIFFMD.

The protein belongs to the CCZ1 family.

The chain is Vacuolar fusion protein CCZ1 homolog from Nematostella vectensis (Starlet sea anemone).